The chain runs to 386 residues: Phosphatidyl-myo-inositol mannosyltransferase (386 aa).

GDP-alpha-D-mannose is bound by residues Tyr-9 and Gly-16. A 1,2-diacyl-sn-glycero-3-phospho-(1D-myo-inositol) contacts are provided by residues Gln-18, 62 to 63 (YN), and Arg-68. Residues Arg-196, 201–202 (RK), 251–253 (VDD), Lys-256, 274–278 (ESFGI), and Glu-282 each bind GDP-alpha-D-mannose.

This sequence belongs to the glycosyltransferase group 1 family. Glycosyltransferase 4 subfamily. Monomer. The cofactor is Mg(2+).

It localises to the cell membrane. It carries out the reaction a 1,2-diacyl-sn-glycero-3-phospho-(1D-myo-inositol) + GDP-alpha-D-mannose = a 1,2-diacyl-sn-glycero-3-phospho-[alpha-D-mannopyranosyl-(1&lt;-&gt;6)-D-myo-inositol] + GDP + H(+). Its pathway is phospholipid metabolism; phosphatidylinositol metabolism. Its function is as follows. Involved in the biosynthesis of phosphatidyl-myo-inositol mannosides (PIM) which are early precursors in the biosynthesis of lipomannans (LM) and lipoarabinomannans (LAM). Catalyzes the addition of a mannosyl residue from GDP-D-mannose (GDP-Man) to the position 2 of the carrier lipid phosphatidyl-myo-inositol (PI) to generate a phosphatidyl-myo-inositol bearing an alpha-1,2-linked mannose residue (PIM1). In contrary to PimB, the mannosyltransferase PimA is unable to transfer a mannose residue to the position 6 of the phosphatidyl-myo-inositol of PIM1. In Mycolicibacterium smegmatis (strain ATCC 700084 / mc(2)155) (Mycobacterium smegmatis), this protein is Phosphatidyl-myo-inositol mannosyltransferase.